A 427-amino-acid polypeptide reads, in one-letter code: 12-alpha,13-alpha-dihydroxyfumitremorgin C prenyltransferase (427 aa).

Residue glutamate 94 participates in substrate binding. Positions 105, 192, 194, 268, 353, 355, 419, and 423 each coordinate dimethylallyl diphosphate.

The protein belongs to the tryptophan dimethylallyltransferase family.

It carries out the reaction 12alpha,13alpha-dihydroxyfumitremorgin C + dimethylallyl diphosphate = fumitremorgin B + diphosphate. It participates in mycotoxin biosynthesis. Functionally, 12-alpha,13-alpha-dihydroxyfumitremorgin C prenyltransferase; part of the gene cluster that mediates the biosynthesis of fumitremorgins, indole alkaloids that carry not only intriguing chemical structures, but also interesting biological and pharmacological activities. The biosynthesis of fumitremorgin-type alkaloids begins by condensation of the two amino acids L-tryptophan and L-proline to brevianamide F, catalyzed by the non-ribosomal peptide synthetase ftmA. Brevianamide F is then prenylated by the prenyltransferase ftmPT1/ftmB in the presence of dimethylallyl diphosphate, resulting in the formation of tryprostatin B. The three cytochrome P450 monooxygenases, ftmP450-1/ftmC, ftmP450-2/ftmE and ftmP450-3/FtmG, are responsible for the conversion of tryprostatin B to 6-hydroxytryprostatin B, tryprostatin A to fumitremorgin C and fumitremorgin C to 12,13-dihydroxyfumitremorgin C, respectively. The putative methyltransferase ftmMT/ftmD is expected for the conversion of 6-hydroxytryprostatin B to tryprostatin A. FtmPT2/FtmH catalyzes the prenylation of 12,13-dihydroxyfumitre-morgin C in the presence of dimethylallyl diphosphate, resulting in the formation of fumitremorgin B. Fumitremorgin B is further converted to verruculogen by ftmOx1/ftmF via the insertion of an endoperoxide bond between the two prenyl moieties. In some fungal species, verruculogen is further converted to fumitremorgin A, but the enzymes involved in this step have not been identified yet. The protein is 12-alpha,13-alpha-dihydroxyfumitremorgin C prenyltransferase of Aspergillus fumigatus (strain ATCC MYA-4609 / CBS 101355 / FGSC A1100 / Af293) (Neosartorya fumigata).